The following is a 271-amino-acid chain: ATP synthase subunit a (271 aa).

5 helical membrane-spanning segments follow: residues 40–60 (TINI…LVLF), 100–120 (LIAP…LMDL), 146–166 (DVNV…FYNI), 220–240 (LIFI…LNVP), and 242–262 (AIFH…LTIV).

This sequence belongs to the ATPase A chain family. As to quaternary structure, F-type ATPases have 2 components, CF(1) - the catalytic core - and CF(0) - the membrane proton channel. CF(1) has five subunits: alpha(3), beta(3), gamma(1), delta(1), epsilon(1). CF(0) has three main subunits: a(1), b(2) and c(9-12). The alpha and beta chains form an alternating ring which encloses part of the gamma chain. CF(1) is attached to CF(0) by a central stalk formed by the gamma and epsilon chains, while a peripheral stalk is formed by the delta and b chains.

The protein localises to the cell inner membrane. Key component of the proton channel; it plays a direct role in the translocation of protons across the membrane. This Shigella flexneri protein is ATP synthase subunit a.